A 185-amino-acid chain; its full sequence is Putative manganese efflux pump MntP (185 aa).

Transmembrane regions (helical) follow at residues 3-23 (IFTLLMIAAGLSMDNFAVSLA), 40-60 (LLFVAAHLVMFSLGWFGVSVI), 64-84 (FDAYDHWISFGLLVFIGLRMI), 102-122 (TFSRLLLIALATSMDALAVGI), 124-144 (LSLAGVHFVLSVAAISFFVLI), and 165-185 (EIFGGIVLIGIALKILLDAMM).

It belongs to the MntP (TC 9.B.29) family.

It localises to the cell inner membrane. In terms of biological role, probably functions as a manganese efflux pump. In Elusimicrobium minutum (strain Pei191), this protein is Putative manganese efflux pump MntP.